The primary structure comprises 256 residues: Type III pantothenate kinase (256 aa).

6–13 (DVGNSNIV) is a binding site for ATP. Substrate-binding positions include Y100 and 107–110 (GADR). D109 acts as the Proton acceptor in catalysis. Residue D129 participates in K(+) binding. Residue T132 participates in ATP binding. T184 provides a ligand contact to substrate.

It belongs to the type III pantothenate kinase family. In terms of assembly, homodimer. NH4(+) is required as a cofactor. It depends on K(+) as a cofactor.

Its subcellular location is the cytoplasm. The catalysed reaction is (R)-pantothenate + ATP = (R)-4'-phosphopantothenate + ADP + H(+). Its pathway is cofactor biosynthesis; coenzyme A biosynthesis; CoA from (R)-pantothenate: step 1/5. In terms of biological role, catalyzes the phosphorylation of pantothenate (Pan), the first step in CoA biosynthesis. This is Type III pantothenate kinase from Geotalea uraniireducens (strain Rf4) (Geobacter uraniireducens).